A 408-amino-acid chain; its full sequence is Aminopeptidase T (408 aa).

Positions 250, 316, 340, 345, 376, and 378 each coordinate a divalent metal cation.

The protein belongs to the peptidase M29 family. As to quaternary structure, homodimer. Requires Co(2+) as cofactor. The cofactor is Zn(2+). Mg(2+) is required as a cofactor.

In terms of biological role, metal-dependent exopeptidase. This Thermus aquaticus protein is Aminopeptidase T.